A 196-amino-acid chain; its full sequence is Peptide deformylase (196 aa).

The Fe cation site is built by C123 and H166. E167 is an active-site residue. H170 is a Fe cation binding site.

It belongs to the polypeptide deformylase family. The cofactor is Fe(2+).

The catalysed reaction is N-terminal N-formyl-L-methionyl-[peptide] + H2O = N-terminal L-methionyl-[peptide] + formate. Its function is as follows. Removes the formyl group from the N-terminal Met of newly synthesized proteins. Requires at least a dipeptide for an efficient rate of reaction. N-terminal L-methionine is a prerequisite for activity but the enzyme has broad specificity at other positions. This chain is Peptide deformylase, found in Lactococcus lactis subsp. lactis (strain IL1403) (Streptococcus lactis).